The primary structure comprises 119 residues: Large ribosomal subunit protein uL18 (119 aa).

Belongs to the universal ribosomal protein uL18 family. As to quaternary structure, part of the 50S ribosomal subunit; part of the 5S rRNA/L5/L18/L25 subcomplex. Contacts the 5S and 23S rRNAs.

Functionally, this is one of the proteins that bind and probably mediate the attachment of the 5S RNA into the large ribosomal subunit, where it forms part of the central protuberance. The sequence is that of Large ribosomal subunit protein uL18 from Chelativorans sp. (strain BNC1).